We begin with the raw amino-acid sequence, 321 residues long: Calcium-binding protein LPS1-alpha (321 aa).

8 consecutive EF-hand domains span residues 15-49 (DAIE…NWTE), 47-82 (WTEE…STKE), 85-120 (YSSD…IYTK), 121-156 (VVDG…KLPI), 165-200 (EYRE…STKY), 200-233 (YSDK…DGVS), 232-267 (VSKD…IYRQ), and 269-304 (VDFE…NCPY). Ca(2+) is bound by residues Asp29, Asn31, Asp33, Thr35, Glu40, Asp60, Asn62, Asp64, His66, Glu71, Asp98, Asp100, Asn102, Arg104, Glu109, Asp134, Asp136, Asp138, His140, Glu145, Asp178, Asn180, Asp182, Ser184, Glu189, Asp213, Asn215, Asp217, Arg219, Glu224, Asp245, Asp247, Asn249, Lys251, Glu256, Asp284, Asp286, Tyr288, and Glu293.

As to expression, aboral ectoderm, a squamous epithelium covering the surface of the late stage embryo and larva.

In terms of biological role, calcium-binding protein involved in larval development and metamorphosis. Likely to function as calcium buffers mediating the transport of calcium from the sea water to the blastocoel where calcium is required for skeleton formation. This Lytechinus pictus (Painted sea urchin) protein is Calcium-binding protein LPS1-alpha.